We begin with the raw amino-acid sequence, 65 residues long: uncharacterized protein (65 aa).

The tract at residues 1–22 (MEKETPQQETKQSTNKESGFFD) is disordered. Polar residues predominate over residues 7 to 17 (QQETKQSTNKE). Positions 22–65 (DEIIKRTNQLLEKEKELHEKYNKEITSQQDQIDQLKKKINQLKY) form a coiled coil.

This is an uncharacterized protein from Dictyostelium discoideum (Social amoeba).